The chain runs to 308 residues: rRNA 2'-O-methyltransferase fibrillarin 1 (308 aa).

The disordered stretch occupies residues Met-1–Lys-68. A compositionally biased stretch (gly residues) spans Gly-22 to Arg-35. A compositionally biased stretch (basic residues) spans Ser-42 to Pro-52. Gly residues predominate over residues Arg-53–Gly-65. S-adenosyl-L-methionine contacts are provided by residues Thr-156–Thr-157, Glu-175–Phe-176, Asp-200–Ala-201, and Asp-220–Gln-223.

The protein belongs to the methyltransferase superfamily. Fibrillarin family. Component of box C/D small nucleolar ribonucleoprotein (snoRNP) particles. Interacts with SKP1A. Expressed in roots, leaves and flowers. Expressed in stems.

Its subcellular location is the nucleus. The protein localises to the nucleolus. The catalysed reaction is a ribonucleotide in rRNA + S-adenosyl-L-methionine = a 2'-O-methylribonucleotide in rRNA + S-adenosyl-L-homocysteine + H(+). It carries out the reaction L-glutaminyl-[histone H2A] + S-adenosyl-L-methionine = N(5)-methyl-L-glutaminyl-[histone H2A] + S-adenosyl-L-homocysteine + H(+). In terms of biological role, S-adenosyl-L-methionine-dependent methyltransferase that has the ability to methylate both RNAs and proteins. Involved in pre-rRNA processing. Utilizes the methyl donor S-adenosyl-L-methionine to catalyze the site-specific 2'-hydroxyl methylation of ribose moieties in pre-ribosomal RNA. Site specificity is provided by a guide RNA that base pairs with the substrate. Methylation occurs at a characteristic distance from the sequence involved in base pairing with the guide RNA. Also acts as a protein methyltransferase by mediating methylation of 'Gln-105' of histone H2A (H2AQ105me), a modification that impairs binding of the FACT complex and is specifically present at 35S ribosomal DNA locus. Binds monophosphate phosphoinositides in vitro. This chain is rRNA 2'-O-methyltransferase fibrillarin 1, found in Arabidopsis thaliana (Mouse-ear cress).